A 507-amino-acid chain; its full sequence is Maturase K (507 aa).

It belongs to the intron maturase 2 family. MatK subfamily.

The protein resides in the plastid. It localises to the chloroplast. Functionally, usually encoded in the trnK tRNA gene intron. Probably assists in splicing its own and other chloroplast group II introns. This chain is Maturase K, found in Magnolia champaca (Yellow jade orchid tree).